We begin with the raw amino-acid sequence, 61 residues long: Protein TfaX (61 aa).

The protein belongs to the tfa family.

Might play a role in cell growth during glycolysis. The polypeptide is Protein TfaX (tfaX) (Escherichia coli (strain K12)).